We begin with the raw amino-acid sequence, 354 residues long: MSLLSDLVNLNLTDATGKIIAEYIWIGGSGMDIRSKARTLPGPVTDPSKLPKWNYDGSSTGQAAGEDSEVILYPQAIFKDPFRKGNNILVMCDAYTPAGDPIPTNKRHNAAKIFSHPDVAKEEPWYGIEQEYTLMQKDVNWPIGWPVGGYPGPQGPYYCGVGADKAIGRDIVDAHYKACLYAGIGISGINGEVMPGQWEFQVGPVEGISSGDQVWVARYLLERITEISGVIVSFDPKPVPGDWNGAGAHCNYSTKTMRNDGGLEVIKKAIGKLQLKHKEHIAAYGEGNERRLTGKHETADINTFSWGVANRGASVRVGRDTEKEGKGYFEDRRPASNMDPYVVTSMIAETTILG.

Residue serine 2 is modified to N-acetylserine. A phosphoserine mark is found at serine 2 and serine 48. One can recognise a GS beta-grasp domain in the interval 19-99; that stretch reads IIAEYIWIGG…VMCDAYTPAG (81 aa). The 249-residue stretch at 106 to 354 folds into the GS catalytic domain; it reads KRHNAAKIFS…SMIAETTILG (249 aa).

Belongs to the glutamine synthetase family. In terms of assembly, homooctamer. In terms of tissue distribution, expressed in the pericycle in the region of mature root.

It localises to the cytoplasm. It catalyses the reaction L-glutamate + NH4(+) + ATP = L-glutamine + ADP + phosphate + H(+). Functionally, low-affinity glutamine synthetase. May contribute to the homeostatic control of glutamine synthesis in roots. The sequence is that of Glutamine synthetase cytosolic isozyme 1-3 (GLN1-3) from Arabidopsis thaliana (Mouse-ear cress).